A 134-amino-acid chain; its full sequence is ATP synthase epsilon chain (134 aa).

It belongs to the ATPase epsilon chain family. F-type ATPases have 2 components, CF(1) - the catalytic core - and CF(0) - the membrane proton channel. CF(1) has five subunits: alpha(3), beta(3), gamma(1), delta(1), epsilon(1). CF(0) has three main subunits: a, b and c.

Its subcellular location is the cell membrane. In terms of biological role, produces ATP from ADP in the presence of a proton gradient across the membrane. The chain is ATP synthase epsilon chain from Ruminiclostridium cellulolyticum (strain ATCC 35319 / DSM 5812 / JCM 6584 / H10) (Clostridium cellulolyticum).